Reading from the N-terminus, the 461-residue chain is Homocitrate synthase (461 aa).

The Pyruvate carboxyltransferase domain maps to 4 to 259 (VGILDSTLRE…IEVVKLDKLQ (256 aa)). Arginine 12 contributes to the 2-oxoglutarate binding site. Residue glutamate 13 coordinates Mg(2+). 2-oxoglutarate is bound by residues histidine 76, arginine 136, and threonine 170. Mg(2+)-binding residues include histidine 198 and histidine 200. Histidine 292 (proton acceptor) is an active-site residue.

The protein belongs to the alpha-IPM synthase/homocitrate synthase family. Homocitrate synthase LYS20/LYS21 subfamily. The cofactor is Mg(2+). Mn(2+) serves as cofactor.

It carries out the reaction acetyl-CoA + 2-oxoglutarate + H2O = (2R)-homocitrate + CoA + H(+). It participates in amino-acid biosynthesis; L-lysine biosynthesis via AAA pathway; L-alpha-aminoadipate from 2-oxoglutarate: step 1/5. Its function is as follows. Catalyzes the aldol-type condensation of 2-oxoglutarate with acetyl-CoA to yield homocitrate. Carries out the first step of the alpha-aminoadipate (AAA) lysine biosynthesis pathway. The sequence is that of Homocitrate synthase from Saccharolobus solfataricus (strain ATCC 35092 / DSM 1617 / JCM 11322 / P2) (Sulfolobus solfataricus).